A 100-amino-acid chain; its full sequence is Urease subunit gamma (100 aa).

It belongs to the urease gamma subunit family. In terms of assembly, heterotrimer of UreA (gamma), UreB (beta) and UreC (alpha) subunits. Three heterotrimers associate to form the active enzyme.

The protein resides in the cytoplasm. The enzyme catalyses urea + 2 H2O + H(+) = hydrogencarbonate + 2 NH4(+). It participates in nitrogen metabolism; urea degradation; CO(2) and NH(3) from urea (urease route): step 1/1. This is Urease subunit gamma from Burkholderia thailandensis (strain ATCC 700388 / DSM 13276 / CCUG 48851 / CIP 106301 / E264).